Consider the following 468-residue polypeptide: N-acyl-phosphatidylethanolamine-hydrolyzing phospholipase D, mitochondrial (468 aa).

Residues 1–39 (MNFVTCHVQMRLLLQRRLVRLRESELFRPQTSLSTFKRH) constitute a mitochondrion transit peptide. A helical transmembrane segment spans residues 54-76 (YARILLLSVLVPYTGYAFYVSLA). Zn(2+)-binding residues include H265, H267, D269, H270, H332, and H425.

It belongs to the NAPE-PLD family. Zn(2+) serves as cofactor.

Its subcellular location is the mitochondrion membrane. It carries out the reaction an N-acyl-1,2-diacyl-sn-glycero-3-phosphoethanolamine + H2O = an N-acylethanolamine + a 1,2-diacyl-sn-glycero-3-phosphate + H(+). In terms of biological role, hydrolyzes N-acyl-phosphatidylethanolamines (NAPEs) to produce N-acylethanolamines (NAEs). The chain is N-acyl-phosphatidylethanolamine-hydrolyzing phospholipase D, mitochondrial (FMP30) from Saccharomyces cerevisiae (strain ATCC 204508 / S288c) (Baker's yeast).